The sequence spans 438 residues: Probable imidazolonepropionase (438 aa).

4-imidazolone-5-propanoate contacts are provided by Y159 and H192. Y159 serves as a coordination point for N-formimidoyl-L-glutamate. H260 lines the Fe(3+) pocket. H260 is a Zn(2+) binding site. Position 263 (E263) interacts with 4-imidazolone-5-propanoate. Position 334 (D334) interacts with Fe(3+). D334 lines the Zn(2+) pocket. N336 contributes to the N-formimidoyl-L-glutamate binding site.

Belongs to the metallo-dependent hydrolases superfamily. HutI family. It depends on Zn(2+) as a cofactor. The cofactor is Fe(3+).

The enzyme catalyses 4-imidazolone-5-propanoate + H2O = N-formimidoyl-L-glutamate. Its pathway is amino-acid degradation; L-histidine degradation into L-glutamate; N-formimidoyl-L-glutamate from L-histidine: step 3/3. In Xenopus laevis (African clawed frog), this protein is Probable imidazolonepropionase (amdhd1).